The chain runs to 312 residues: Ribosomal protein L11 methyltransferase (312 aa).

S-adenosyl-L-methionine is bound by residues Thr-163, Gly-184, Asp-206, and Asn-248.

This sequence belongs to the methyltransferase superfamily. PrmA family.

The protein localises to the cytoplasm. It carries out the reaction L-lysyl-[protein] + 3 S-adenosyl-L-methionine = N(6),N(6),N(6)-trimethyl-L-lysyl-[protein] + 3 S-adenosyl-L-homocysteine + 3 H(+). Functionally, methylates ribosomal protein L11. This Clostridium botulinum (strain 657 / Type Ba4) protein is Ribosomal protein L11 methyltransferase.